The sequence spans 129 residues: Glycine cleavage system H protein (129 aa).

Residues 24–106 (TYTVGITEHA…YADGWIFKIK (83 aa)) enclose the Lipoyl-binding domain. At Lys65 the chain carries N6-lipoyllysine.

The protein belongs to the GcvH family. The glycine cleavage system is composed of four proteins: P, T, L and H. Requires (R)-lipoate as cofactor.

Functionally, the glycine cleavage system catalyzes the degradation of glycine. The H protein shuttles the methylamine group of glycine from the P protein to the T protein. The sequence is that of Glycine cleavage system H protein from Salmonella arizonae (strain ATCC BAA-731 / CDC346-86 / RSK2980).